A 70-amino-acid chain; its full sequence is DNA-directed RNA polymerase subunit epsilon (70 aa).

It belongs to the RNA polymerase subunit epsilon family. RNAP is composed of a core of 2 alpha, a beta and a beta' subunit. The core is associated with a delta subunit, and at least one of epsilon or omega. When a sigma factor is associated with the core the holoenzyme is formed, which can initiate transcription.

The enzyme catalyses RNA(n) + a ribonucleoside 5'-triphosphate = RNA(n+1) + diphosphate. In terms of biological role, a non-essential component of RNA polymerase (RNAP). The sequence is that of DNA-directed RNA polymerase subunit epsilon from Limosilactobacillus reuteri (strain DSM 20016) (Lactobacillus reuteri).